A 489-amino-acid chain; its full sequence is Glycogen synthase (489 aa).

Lys15 lines the ADP-alpha-D-glucose pocket.

Belongs to the glycosyltransferase 1 family. Bacterial/plant glycogen synthase subfamily.

It catalyses the reaction [(1-&gt;4)-alpha-D-glucosyl](n) + ADP-alpha-D-glucose = [(1-&gt;4)-alpha-D-glucosyl](n+1) + ADP + H(+). The protein operates within glycan biosynthesis; glycogen biosynthesis. Its function is as follows. Synthesizes alpha-1,4-glucan chains using ADP-glucose. The chain is Glycogen synthase from Francisella tularensis subsp. holarctica (strain FTNF002-00 / FTA).